Here is a 1593-residue protein sequence, read N- to C-terminus: ABC transporter C family member 8 (1593 aa).

Transmembrane regions (helical) follow at residues 27 to 47 (VVMT…LYYL), 75 to 95 (VIVS…IVSI), 100 to 120 (FEIL…GLVY), 135 to 155 (LYWV…TLAI), 169 to 189 (FSYF…VLFF), 280 to 300 (FYIA…GPTL), 318 to 338 (YDGL…SLLL), 392 to 412 (LCPY…SLVL), 419 to 439 (ASVF…LAIS), and 505 to 525 (LLLW…VYIL). Residues 280–561 (FYIAALFKII…LPSVVSSIIE (282 aa)) enclose the ABC transmembrane type-1 1 domain. The ABC transporter 1 domain maps to 594–818 (VKIDNATLEW…GSHFTELMSH (225 aa)). Residue 627 to 634 (GQVGSGKS) participates in ATP binding. The disordered stretch occupies residues 816–938 (MSHDEQQQQL…PLQKGEKSSV (123 aa)). Positions 844 to 875 (GDNKESENNEEQNEEEEGENENLLEKVLRKSR) form a coiled coil. Over residues 851–865 (NNEEQNEEEEGENEN) the composition is skewed to acidic residues. Positions 877–886 (RSPSPSSNRN) are enriched in low complexity. Residues 905–922 (EEDEQDERELMEDIDIDG) show a composition bias toward acidic residues. 5 helical membrane-spanning segments follow: residues 1005-1025 (IGVL…LLSI), 1064-1084 (AKYY…ATFL), 1157-1177 (IIVI…VGAL), 1251-1271 (LAIR…LYTV), and 1280-1300 (GTAG…NWMV). The region spanning 1010–1308 (ATCIIGFYVL…MVRMSCDLEN (299 aa)) is the ABC transmembrane type-1 2 domain. The 235-residue stretch at 1344–1578 (IVFKNLWLTY…QDSIYYSLVK (235 aa)) folds into the ABC transporter 2 domain. An ATP-binding site is contributed by 1378–1385 (GRTGAGKS).

It belongs to the ABC transporter superfamily. ABCC family. Conjugate transporter (TC 3.A.1.208) subfamily.

It is found in the membrane. This chain is ABC transporter C family member 8 (abcC8), found in Dictyostelium discoideum (Social amoeba).